Here is a 240-residue protein sequence, read N- to C-terminus: MATLFIADLHLCAEEPAITAGFLRFLAGEARKADALYILGDLFEAWIGDDDPNPLHHQMAAAIKAVSDSGVPCYFIHGNRDFLLGKRFARESGMTLLPEEKVLELYGRRVLIMHGDTLCTDDAGYQAFRAKVHKPWLQTLFLALPLFVRKRIAARMRANSKEANSSKSLAIMDVNQNAVVSAMEKHQVQWLIHGHTHRPAVHELIANQQTAFRVVLGAWHTEGSMVKVTADDVELIHFPF.

Mn(2+) contacts are provided by D8, H10, D41, N79, and H114. 79 to 80 (NR) lines the substrate pocket. Residues D122, S160, N164, K167, and H195 each coordinate substrate. Mn(2+) is bound by residues H195 and H197.

It belongs to the LpxH family. The cofactor is Mn(2+).

It localises to the cell inner membrane. The catalysed reaction is UDP-2-N,3-O-bis[(3R)-3-hydroxytetradecanoyl]-alpha-D-glucosamine + H2O = 2-N,3-O-bis[(3R)-3-hydroxytetradecanoyl]-alpha-D-glucosaminyl 1-phosphate + UMP + 2 H(+). It functions in the pathway glycolipid biosynthesis; lipid IV(A) biosynthesis; lipid IV(A) from (3R)-3-hydroxytetradecanoyl-[acyl-carrier-protein] and UDP-N-acetyl-alpha-D-glucosamine: step 4/6. In terms of biological role, hydrolyzes the pyrophosphate bond of UDP-2,3-diacylglucosamine to yield 2,3-diacylglucosamine 1-phosphate (lipid X) and UMP by catalyzing the attack of water at the alpha-P atom. Involved in the biosynthesis of lipid A, a phosphorylated glycolipid that anchors the lipopolysaccharide to the outer membrane of the cell. The polypeptide is UDP-2,3-diacylglucosamine hydrolase (Escherichia coli O6:H1 (strain CFT073 / ATCC 700928 / UPEC)).